A 525-amino-acid polypeptide reads, in one-letter code: Peptide chain release factor 3 (525 aa).

In terms of domain architecture, tr-type G spans alanine 9–glutamine 276. Residues serine 18–threonine 25, aspartate 86–histidine 90, and asparagine 140–aspartate 143 contribute to the GTP site.

The protein belongs to the TRAFAC class translation factor GTPase superfamily. Classic translation factor GTPase family. PrfC subfamily.

It localises to the cytoplasm. In terms of biological role, increases the formation of ribosomal termination complexes and stimulates activities of RF-1 and RF-2. It binds guanine nucleotides and has strong preference for UGA stop codons. It may interact directly with the ribosome. The stimulation of RF-1 and RF-2 is significantly reduced by GTP and GDP, but not by GMP. In Francisella tularensis subsp. tularensis (strain FSC 198), this protein is Peptide chain release factor 3.